The sequence spans 93 residues: MKFAVILLFSLVVLTVASESVEEVRREIDIEDLPEQQRGCADLRQPCTEGDDCSCCGSEGVCNCSHPHKKGCYCKTAGPLEKLAKKFKGCKNK.

The first 18 residues, 1–18 (MKFAVILLFSLVVLTVAS), serve as a signal peptide directing secretion. A propeptide spanning residues 19 to 38 (ESVEEVRREIDIEDLPEQQR) is cleaved from the precursor.

This sequence belongs to the neurotoxin 31 family. In terms of processing, contains 5 disulfide bonds. As to expression, expressed by the venom gland.

Its subcellular location is the secreted. The chain is U12-lycotoxin-Ls1a from Lycosa singoriensis (Wolf spider).